The chain runs to 394 residues: Elongation factor Tu (394 aa).

A tr-type G domain is found at 10–204; that stretch reads KPHVNVGTIG…ALDTYIPEPE (195 aa). The segment at 19-26 is G1; the sequence is GHVDHGKT. 19 to 26 lines the GTP pocket; it reads GHVDHGKT. Thr26 contacts Mg(2+). The tract at residues 60–64 is G2; sequence GITIN. The tract at residues 81–84 is G3; it reads DCPG. GTP is bound by residues 81 to 85 and 136 to 139; these read DCPGH and NKCD. Residues 136–139 form a G4 region; sequence NKCD. Positions 174-176 are G5; sequence SAL.

It belongs to the TRAFAC class translation factor GTPase superfamily. Classic translation factor GTPase family. EF-Tu/EF-1A subfamily. In terms of assembly, monomer.

It localises to the cytoplasm. It catalyses the reaction GTP + H2O = GDP + phosphate + H(+). Its function is as follows. GTP hydrolase that promotes the GTP-dependent binding of aminoacyl-tRNA to the A-site of ribosomes during protein biosynthesis. This chain is Elongation factor Tu, found in Colwellia psychrerythraea (strain 34H / ATCC BAA-681) (Vibrio psychroerythus).